Reading from the N-terminus, the 511-residue chain is 2,3-bisphosphoglycerate-independent phosphoglycerate mutase (511 aa).

Mn(2+) is bound by residues Asp-14 and Ser-64. Ser-64 acts as the Phosphoserine intermediate in catalysis. Residues His-125, 155–156 (RD), Arg-187, Arg-193, 259–262 (RADR), and Lys-333 contribute to the substrate site. Residues Asp-400, His-404, Asp-441, His-442, and His-460 each contribute to the Mn(2+) site.

The protein belongs to the BPG-independent phosphoglycerate mutase family. In terms of assembly, monomer. Mn(2+) serves as cofactor.

The enzyme catalyses (2R)-2-phosphoglycerate = (2R)-3-phosphoglycerate. It participates in carbohydrate degradation; glycolysis; pyruvate from D-glyceraldehyde 3-phosphate: step 3/5. Its function is as follows. Catalyzes the interconversion of 2-phosphoglycerate and 3-phosphoglycerate. In Pseudomonas entomophila (strain L48), this protein is 2,3-bisphosphoglycerate-independent phosphoglycerate mutase.